Here is a 413-residue protein sequence, read N- to C-terminus: Histidine--tRNA ligase (413 aa).

The protein belongs to the class-II aminoacyl-tRNA synthetase family. In terms of assembly, homodimer.

It is found in the cytoplasm. The enzyme catalyses tRNA(His) + L-histidine + ATP = L-histidyl-tRNA(His) + AMP + diphosphate + H(+). The sequence is that of Histidine--tRNA ligase from Neorickettsia sennetsu (strain ATCC VR-367 / Miyayama) (Ehrlichia sennetsu).